Consider the following 559-residue polypeptide: SH3 domain-binding protein 2 (559 aa).

The region spanning 26–130 is the PH domain; the sequence is GVAKAGYLHK…WMAFVRREIG (105 aa). A disordered region spans residues 164 to 449; the sequence is LSSYPMDNED…EDSDEDYEKV (286 aa). A compositionally biased stretch (acidic residues) spans 170-184; that stretch reads DNEDYEHEDEDDSYL. A phosphotyrosine; by SYK mark is found at tyrosine 174 and tyrosine 183. The SH3-binding signature appears at 201–210; sequence PPAYPPPPVP. Composition is skewed to pro residues over residues 202 to 213 and 233 to 242; these read PAYPPPPVPVPR and PLLPPPPPKR. Residues 252 to 265 are compositionally biased toward basic and acidic residues; it reads EDAKDALGLRRVEP. Serine 277 is modified (phosphoserine). Residues 313-327 show a composition bias toward low complexity; sequence TSSVSSSTTMAVATS. The segment covering 360–371 has biased composition (basic and acidic residues); sequence KIAEEPSPREAA. Residues 375–386 show a composition bias toward pro residues; the sequence is PVPPVAPRPPVQ. Serine 414 and serine 425 each carry phosphoserine. Acidic residues predominate over residues 437 to 446; it reads TGEEDSDEDY. Tyrosine 446 is subject to Phosphotyrosine; by SYK. The SH2 domain maps to 455–553; that stretch reads VFVNTTESCE…HQSLLLRHPY (99 aa).

In terms of processing, phosphorylated. Phosphorylation at Tyr-446 may stimulate the activity of the LYN kinase.

Its function is as follows. Binds differentially to the SH3 domains of certain proteins of signal transduction pathways. Binds to phosphatidylinositols; linking the hemopoietic tyrosine kinase fes to the cytoplasmic membrane in a phosphorylation dependent mechanism. The sequence is that of SH3 domain-binding protein 2 (Sh3bp2) from Mus musculus (Mouse).